Reading from the N-terminus, the 230-residue chain is Ureidoacrylate amidohydrolase RutB (230 aa).

Catalysis depends on D24, which acts as the Proton acceptor. K133 is an active-site residue. C166 serves as the catalytic Nucleophile.

This sequence belongs to the isochorismatase family. RutB subfamily.

The enzyme catalyses (Z)-3-ureidoacrylate + H2O + H(+) = (Z)-3-aminoacrylate + NH4(+) + CO2. It carries out the reaction (Z)-3-ureidoacrylate + H2O = (Z)-3-aminoacrylate + carbamate + H(+). The catalysed reaction is (Z)-2-methylureidoacrylate + H2O + H(+) = (Z)-2-methylaminoacrylate + NH4(+) + CO2. In terms of biological role, hydrolyzes ureidoacrylate to form aminoacrylate and carbamate. The carbamate hydrolyzes spontaneously, thereby releasing one of the nitrogen atoms of the pyrimidine ring as ammonia and one of its carbon atoms as CO2. This Escherichia coli O157:H7 protein is Ureidoacrylate amidohydrolase RutB.